Reading from the N-terminus, the 240-residue chain is E3 ubiquitin-protein ligase LubX (240 aa).

U-box domains lie at 30-103 (TTPT…QTNY) and 125-198 (EIPD…RKRE).

Post-translationally, ubiquitinated in the presence of host E1 ubiquitin-activating enzyme, E2 ubiquitin-conjugating enzyme and ubiquitin.

It is found in the secreted. The protein resides in the host cell. The enzyme catalyses S-ubiquitinyl-[E2 ubiquitin-conjugating enzyme]-L-cysteine + [acceptor protein]-L-lysine = [E2 ubiquitin-conjugating enzyme]-L-cysteine + N(6)-ubiquitinyl-[acceptor protein]-L-lysine.. Functionally, effector proteins function to alter host cell physiology and promote bacterial survival in host tissues. This protein is an E3 ubiquitin ligase that interferes with host's ubiquitination pathway. This Legionella pneumophila (strain Paris) protein is E3 ubiquitin-protein ligase LubX (lubX).